We begin with the raw amino-acid sequence, 648 residues long: MTALLELCNVSRSYPSGEEQVAVLKDISLQIHAGEMVAIVGVSGSGKSTLMNILGCLDKPTSGTYRVAGRDVSTLDPDALAQLRREHFGFIFQRYHLLSHLTAAQNVEIPAVYAGIERKKRQTRARELLLRLGLSDRVDYPPSQLSGGQQQRVSIARALMNGGQVILADEPTGALDSHSGEEVMAILRQLRDRGHTVIIVTHDPLIAAQAERIIEIHDGKIVHNPPAQEKKREQGVDAAVVNTAPGWRQFASSFREALSMAWLAMAANKMRTLLTMLGIIIGIASVVSIVVVGDAAKQMVLADIRAMGTNTIDIHPGKDFGDDNPQYRQALKYDDLVAIQKQPWVNSATPSVSKSLRLRYGNIDIAVNANGVSGDYFNVYGMSFREGNTFNAVQQQDRAQVVVLDANTRRQLFPNKANVVGEVVLAGNMPVIVIGVAEEKPSMYGNSNLLQVWLPYSTMSDRIMGQSWLNSITVRVKDGVDSDQAEQQLTRLLTLRHGKKDFFTWNMDSVLKTAEKTTYTLQLFLTLVAVISLVVGGIGVMNIMLVSVTERTREIGIRMAVGARASDVLQQFLIEAVLVCLVGGALGISLSMFIAFMLQLFLPGWEIGFSLTALASAFLCSTFTGILFGWLPARNAARLDPVDALARE.

The region spanning Leu5 to Thr243 is the ABC transporter domain. Gly41–Ser48 provides a ligand contact to ATP. 5 helical membrane-spanning segments follow: residues Leu273–Gly293, Ala417–Ala437, Leu523–Ile543, Val577–Met597, and Leu611–Leu631.

The protein belongs to the ABC transporter superfamily. Macrolide exporter (TC 3.A.1.122) family. As to quaternary structure, homodimer. Part of the tripartite efflux system MacAB-TolC, which is composed of an inner membrane transporter, MacB, a periplasmic membrane fusion protein, MacA, and an outer membrane component, TolC. The complex forms a large protein conduit and can translocate molecules across both the inner and outer membranes. Interacts with MacA.

It is found in the cell inner membrane. Part of the tripartite efflux system MacAB-TolC. MacB is a non-canonical ABC transporter that contains transmembrane domains (TMD), which form a pore in the inner membrane, and an ATP-binding domain (NBD), which is responsible for energy generation. Confers resistance against macrolides. In Salmonella choleraesuis (strain SC-B67), this protein is Macrolide export ATP-binding/permease protein MacB.